The chain runs to 115 residues: Cytochrome c oxidase subunit 3 (115 aa).

The next 2 helical transmembrane spans lie at 32–52 (CLQG…LQGL) and 70–90 (FFLA…FLMI).

The protein belongs to the cytochrome c oxidase subunit 3 family. In terms of assembly, component of the cytochrome c oxidase (complex IV, CIV), a multisubunit enzyme composed of a catalytic core of 3 subunits and several supernumerary subunits. The complex exists as a monomer or a dimer and forms supercomplexes (SCs) in the inner mitochondrial membrane with ubiquinol-cytochrome c oxidoreductase (cytochrome b-c1 complex, complex III, CIII).

It localises to the mitochondrion inner membrane. The enzyme catalyses 4 Fe(II)-[cytochrome c] + O2 + 8 H(+)(in) = 4 Fe(III)-[cytochrome c] + 2 H2O + 4 H(+)(out). Functionally, component of the cytochrome c oxidase, the last enzyme in the mitochondrial electron transport chain which drives oxidative phosphorylation. The respiratory chain contains 3 multisubunit complexes succinate dehydrogenase (complex II, CII), ubiquinol-cytochrome c oxidoreductase (cytochrome b-c1 complex, complex III, CIII) and cytochrome c oxidase (complex IV, CIV), that cooperate to transfer electrons derived from NADH and succinate to molecular oxygen, creating an electrochemical gradient over the inner membrane that drives transmembrane transport and the ATP synthase. Cytochrome c oxidase is the component of the respiratory chain that catalyzes the reduction of oxygen to water. Electrons originating from reduced cytochrome c in the intermembrane space (IMS) are transferred via the dinuclear copper A center (CU(A)) of subunit 2 and heme A of subunit 1 to the active site in subunit 1, a binuclear center (BNC) formed by heme A3 and copper B (CU(B)). The BNC reduces molecular oxygen to 2 water molecules using 4 electrons from cytochrome c in the IMS and 4 protons from the mitochondrial matrix. This is Cytochrome c oxidase subunit 3 (COIII) from Artemia salina (Brine shrimp).